Consider the following 262-residue polypeptide: Adenosylcobinamide-GDP ribazoletransferase (262 aa).

8 helical membrane passes run 4–21 (AWSG…IPIR), 37–57 (AFPL…FIFS), 62–82 (LSPL…AGGL), 112–132 (VGAF…LFVF), 141–161 (IFLI…LLIY), 181–201 (YDAH…CAIH), 202–222 (FSVW…VFVA), and 236–256 (DALG…IWLL).

This sequence belongs to the CobS family. It depends on Mg(2+) as a cofactor.

Its subcellular location is the cell membrane. The catalysed reaction is alpha-ribazole + adenosylcob(III)inamide-GDP = adenosylcob(III)alamin + GMP + H(+). The enzyme catalyses alpha-ribazole 5'-phosphate + adenosylcob(III)inamide-GDP = adenosylcob(III)alamin 5'-phosphate + GMP + H(+). It functions in the pathway cofactor biosynthesis; adenosylcobalamin biosynthesis; adenosylcobalamin from cob(II)yrinate a,c-diamide: step 7/7. Joins adenosylcobinamide-GDP and alpha-ribazole to generate adenosylcobalamin (Ado-cobalamin). Also synthesizes adenosylcobalamin 5'-phosphate from adenosylcobinamide-GDP and alpha-ribazole 5'-phosphate. This Geobacillus sp. (strain WCH70) protein is Adenosylcobinamide-GDP ribazoletransferase.